Reading from the N-terminus, the 226-residue chain is ATP synthase F(0) complex subunit a (226 aa).

A run of 6 helical transmembrane segments spans residues 6-26 (FASFITPTMMGLPIVVTIIMF), 68-88 (WALMIVSLIMFIGSTNLLGLL), 97-117 (QLSMNLSMAIPLWAGAVILGF), 138-158 (IPMLIIIETISLFIQPMALAV), 164-184 (ITAGHLLMHLIGGATLVLMDI), and 189-209 (ATITFIILLLLTVLEFAVALI).

Belongs to the ATPase A chain family. As to quaternary structure, component of the ATP synthase complex composed at least of ATP5F1A/subunit alpha, ATP5F1B/subunit beta, ATP5MC1/subunit c (homooctomer), MT-ATP6/subunit a, MT-ATP8/subunit 8, ATP5ME/subunit e, ATP5MF/subunit f, ATP5MG/subunit g, ATP5MK/subunit k, ATP5MJ/subunit j, ATP5F1C/subunit gamma, ATP5F1D/subunit delta, ATP5F1E/subunit epsilon, ATP5PF/subunit F6, ATP5PB/subunit b, ATP5PD/subunit d, ATP5PO/subunit OSCP. ATP synthase complex consists of a soluble F(1) head domain (subunits alpha(3) and beta(3)) - the catalytic core - and a membrane F(0) domain - the membrane proton channel (subunits c, a, 8, e, f, g, k and j). These two domains are linked by a central stalk (subunits gamma, delta, and epsilon) rotating inside the F1 region and a stationary peripheral stalk (subunits F6, b, d, and OSCP). Interacts with DNAJC30; interaction is direct.

The protein localises to the mitochondrion inner membrane. The enzyme catalyses H(+)(in) = H(+)(out). Its function is as follows. Subunit a, of the mitochondrial membrane ATP synthase complex (F(1)F(0) ATP synthase or Complex V) that produces ATP from ADP in the presence of a proton gradient across the membrane which is generated by electron transport complexes of the respiratory chain. ATP synthase complex consist of a soluble F(1) head domain - the catalytic core - and a membrane F(1) domain - the membrane proton channel. These two domains are linked by a central stalk rotating inside the F(1) region and a stationary peripheral stalk. During catalysis, ATP synthesis in the catalytic domain of F(1) is coupled via a rotary mechanism of the central stalk subunits to proton translocation. With the subunit c (ATP5MC1), forms the proton-conducting channel in the F(0) domain, that contains two crucial half-channels (inlet and outlet) that facilitate proton movement from the mitochondrial intermembrane space (IMS) into the matrix. Protons are taken up via the inlet half-channel and released through the outlet half-channel, following a Grotthuss mechanism. The protein is ATP synthase F(0) complex subunit a of Rattus norvegicus (Rat).